Reading from the N-terminus, the 95-residue chain is uncharacterized protein (95 aa).

A helical membrane pass occupies residues Ile12–Ile32.

It localises to the cell membrane. This is an uncharacterized protein from Escherichia coli O6:H1 (strain CFT073 / ATCC 700928 / UPEC).